The primary structure comprises 95 residues: Co-chaperonin GroES (95 aa).

The protein belongs to the GroES chaperonin family. In terms of assembly, heptamer of 7 subunits arranged in a ring. Interacts with the chaperonin GroEL.

It localises to the cytoplasm. Its function is as follows. Together with the chaperonin GroEL, plays an essential role in assisting protein folding. The GroEL-GroES system forms a nano-cage that allows encapsulation of the non-native substrate proteins and provides a physical environment optimized to promote and accelerate protein folding. GroES binds to the apical surface of the GroEL ring, thereby capping the opening of the GroEL channel. The polypeptide is Co-chaperonin GroES (Pseudoalteromonas translucida (strain TAC 125)).